The sequence spans 58 residues: GCKARGDTCQKDCDCCGCFYKCHCPLDWFGGKWHPLGCSCVYGDKYICEKKKKECPNV.

Cystine bridges form between Cys-2–Cys-16, Cys-9–Cys-22, Cys-13–Cys-48, Cys-15–Cys-40, Cys-18–Cys-55, and Cys-24–Cys-38.

As to expression, expressed by the venom gland.

The protein resides in the secreted. Its function is as follows. Probable neurotoxin. The polypeptide is U7-ctenitoxin-Pr1a (Phoneutria reidyi (Brazilian Amazonian armed spider)).